The following is a 640-amino-acid chain: 1-deoxy-D-xylulose-5-phosphate synthase (640 aa).

Thiamine diphosphate contacts are provided by residues H79 and G120–S122. Residue D151 coordinates Mg(2+). Thiamine diphosphate contacts are provided by residues G152–S153, N180, Y290, and E372. N180 contacts Mg(2+).

This sequence belongs to the transketolase family. DXPS subfamily. As to quaternary structure, homodimer. The cofactor is Mg(2+). Thiamine diphosphate is required as a cofactor.

It carries out the reaction D-glyceraldehyde 3-phosphate + pyruvate + H(+) = 1-deoxy-D-xylulose 5-phosphate + CO2. It participates in metabolic intermediate biosynthesis; 1-deoxy-D-xylulose 5-phosphate biosynthesis; 1-deoxy-D-xylulose 5-phosphate from D-glyceraldehyde 3-phosphate and pyruvate: step 1/1. Its function is as follows. Catalyzes the acyloin condensation reaction between C atoms 2 and 3 of pyruvate and glyceraldehyde 3-phosphate to yield 1-deoxy-D-xylulose-5-phosphate (DXP). The polypeptide is 1-deoxy-D-xylulose-5-phosphate synthase (Rhodopseudomonas palustris (strain BisA53)).